The primary structure comprises 626 residues: Chaperone protein HtpG (626 aa).

The tract at residues 1 to 341 is a; substrate-binding; sequence METKQFKAES…SEDLSLNISR (341 aa). Residues 342–552 form a b region; the sequence is EMLQHDRQLK…EGEISIEMEK (211 aa). The segment at 553 to 626 is c; it reads ILSAMPNNEN…FSNSICKLMI (74 aa).

Belongs to the heat shock protein 90 family. As to quaternary structure, homodimer.

It localises to the cytoplasm. Molecular chaperone. Has ATPase activity. This Alkaliphilus oremlandii (strain OhILAs) (Clostridium oremlandii (strain OhILAs)) protein is Chaperone protein HtpG.